The primary structure comprises 375 residues: Histidine biosynthesis bifunctional protein HisB (375 aa).

Positions 1-168 (MTPILFVDRD…GIAHELADAP (168 aa)) are histidinol-phosphatase. Residue D8 is the Nucleophile of the active site. Mg(2+)-binding residues include D8, D10, and D128. The Proton donor role is filled by D10. Residues 169–375 (RRALVQRNTK…TALPTTKGTL (207 aa)) form an imidazoleglycerol-phosphate dehydratase region.

The protein in the N-terminal section; belongs to the histidinol-phosphatase family. This sequence in the C-terminal section; belongs to the imidazoleglycerol-phosphate dehydratase family. Mg(2+) is required as a cofactor.

The protein resides in the cytoplasm. It carries out the reaction D-erythro-1-(imidazol-4-yl)glycerol 3-phosphate = 3-(imidazol-4-yl)-2-oxopropyl phosphate + H2O. It catalyses the reaction L-histidinol phosphate + H2O = L-histidinol + phosphate. Its pathway is amino-acid biosynthesis; L-histidine biosynthesis; L-histidine from 5-phospho-alpha-D-ribose 1-diphosphate: step 6/9. It participates in amino-acid biosynthesis; L-histidine biosynthesis; L-histidine from 5-phospho-alpha-D-ribose 1-diphosphate: step 8/9. The protein is Histidine biosynthesis bifunctional protein HisB of Xanthomonas axonopodis pv. citri (strain 306).